Reading from the N-terminus, the 568-residue chain is Sphingosine-1-phosphate lyase 1 (568 aa).

Residues 1–41 lie on the Lumenal side of the membrane; sequence MPSTDLLKLKDFEPYLEILEAYSTKAKNYVNGYCTKYEPWQ. The chain crosses the membrane as a helical; Signal-anchor for type III membrane protein span at residues 42 to 62; sequence LIAGSVLCTLLVVWVYELIFQ. Topologically, residues 63 to 568 are cytoplasmic; the sequence is PESLWSRFKN…NQMNGSPKPR (506 aa). Lys-353 is modified (N6-(pyridoxal phosphate)lysine; alternate). Lys-353 bears the N6-acetyllysine; alternate mark. Residues Tyr-356 and Tyr-366 each carry the 3'-nitrotyrosine modification. Phosphoserine is present on Ser-564.

It belongs to the group II decarboxylase family. Sphingosine-1-phosphate lyase subfamily. As to quaternary structure, homodimer. It depends on pyridoxal 5'-phosphate as a cofactor.

Its subcellular location is the endoplasmic reticulum membrane. The catalysed reaction is sphinganine 1-phosphate = hexadecanal + phosphoethanolamine. The enzyme catalyses sphing-4-enine 1-phosphate = (2E)-hexadecenal + phosphoethanolamine. Its pathway is lipid metabolism; sphingolipid metabolism. Functionally, cleaves phosphorylated sphingoid bases (PSBs), such as sphingosine-1-phosphate, into fatty aldehydes and phosphoethanolamine. Elevates stress-induced ceramide production and apoptosis. Required for global lipid homeostasis in liver and cholesterol homeostasis in fibroblasts. Involved in the regulation of pro-inflammatory response and neutrophil trafficking. Modulates neuronal autophagy via phosphoethanolamine production which regulates accumulation of aggregate-prone proteins such as APP. Seems to play a role in establishing neuronal contact sites and axonal maintenance. In Rattus norvegicus (Rat), this protein is Sphingosine-1-phosphate lyase 1.